The sequence spans 324 residues: Biotin synthase (324 aa).

Residues 37–264 enclose the Radical SAM core domain; it reads NEVQVAALMN…ASYVRLAAGR (228 aa). The [4Fe-4S] cluster site is built by cysteine 52, cysteine 56, and cysteine 59. Residues cysteine 96, cysteine 127, cysteine 187, and arginine 259 each coordinate [2Fe-2S] cluster.

The protein belongs to the radical SAM superfamily. Biotin synthase family. Homodimer. [4Fe-4S] cluster serves as cofactor. It depends on [2Fe-2S] cluster as a cofactor.

The enzyme catalyses (4R,5S)-dethiobiotin + (sulfur carrier)-SH + 2 reduced [2Fe-2S]-[ferredoxin] + 2 S-adenosyl-L-methionine = (sulfur carrier)-H + biotin + 2 5'-deoxyadenosine + 2 L-methionine + 2 oxidized [2Fe-2S]-[ferredoxin]. It functions in the pathway cofactor biosynthesis; biotin biosynthesis; biotin from 7,8-diaminononanoate: step 2/2. Functionally, catalyzes the conversion of dethiobiotin (DTB) to biotin by the insertion of a sulfur atom into dethiobiotin via a radical-based mechanism. In Anaplasma marginale (strain Florida), this protein is Biotin synthase.